The chain runs to 503 residues: MGTGAGGPSVLALLFAVCAPLRLQAEELGDGCGHIVTSQDSGTMTSKNYPGTYPNYTVCEKIITVPKGKRLILRLGDLNIESKTCASDYLLFSSATDQYGPYCGSWAVPKELRLNSNEVTVLFKSGSHISGRGFLLTYASSDHPDLITCLERGSHYFEEKYSKFCPAGCRDIAGDISGNTKDGYRDTSLLCKAAIHAGIITDELGGHINLLQSKGISHYEGLLANGVLSRHGSLSEKRFLFTTPGMNITTVAIPSVIFIALLLTGMGIFAICRKRKKKGNPYVSADAQKTGCWKQIKYPFARHQSTEFTISYDNEKEMTQKLDLITSDMADYQQPLMIGTGTVARKGSTFRPMDTDTEEVRVNTEASGHYDCPHRPGRHEYALPLTHSEPEYATPIVERHLLRAHTFSTQSGYRVPGPRPTHKHSHSSGGFPPATGATQVESYQRPASPKPVGGGYDKPAASSFLDSRDPASQSQMTSGGDDGYSAPRNGLAPLNQTAMTALL.

Positions methionine 1–alanine 25 are cleaved as a signal peptide. The Extracellular segment spans residues glutamate 26–threonine 250. Intrachain disulfides connect cysteine 32–cysteine 59, cysteine 85–cysteine 103, cysteine 149–cysteine 165, and cysteine 169–cysteine 191. The CUB domain occupies cysteine 32–serine 141. The N-linked (GlcNAc...) asparagine glycan is linked to asparagine 55. The LCCL domain maps to histidine 143–phenylalanine 239. Asparagine 247 carries N-linked (GlcNAc...) asparagine glycosylation. Residues valine 251 to isoleucine 271 traverse the membrane as a helical segment. Over cysteine 272–leucine 503 the chain is Cytoplasmic. Serine 305 is modified (phosphoserine). Threonine 406 carries the phosphothreonine modification. The tract at residues glutamine 410–leucine 503 is disordered. Over residues leucine 494–leucine 503 the composition is skewed to polar residues.

The protein resides in the membrane. The protein is Discoidin, CUB and LCCL domain-containing protein 1 (Dcbld1) of Mus musculus (Mouse).